The chain runs to 123 residues: Thioredoxin H-type (123 aa).

In terms of domain architecture, Thioredoxin spans 2 to 119 (AATAELIPAG…IEAKLLKHSQ (118 aa)). Cys45 and Cys48 are disulfide-bonded.

It belongs to the thioredoxin family. Plant H-type subfamily.

It is found in the cytoplasm. Its function is as follows. Participates in various redox reactions through the reversible oxidation of the active center dithiol to a disulfide. The H form is known to activate a number of cytosolic enzymes. This is Thioredoxin H-type (PEC-2) from Brassica campestris (Field mustard).